Reading from the N-terminus, the 1093-residue chain is Probable phosphorylase b kinase regulatory subunit beta (1093 aa).

Positions 1 to 27 (MRDVPKSLGLSVTTPGGSSGAPDSGRH) are disordered. Calmodulin-binding stretches follow at residues 6-27 (KSLG…SGRH), 751-778 (QLYH…IVDS), and 905-936 (EKLT…ILQR). Cysteine 1090 carries S-farnesyl cysteine lipidation.

Belongs to the phosphorylase b kinase regulatory chain family. In terms of processing, although the final Cys may be farnesylated, the terminal tripeptide is probably not removed, and the C-terminus is not methylated.

The protein resides in the cell membrane. It participates in glycan biosynthesis; glycogen metabolism. In terms of biological role, phosphorylase b kinase catalyzes the phosphorylation of serine in certain substrates, including troponin I. The beta chain acts as a regulatory unit and modulates the activity of the holoenzyme in response to phosphorylation. The polypeptide is Probable phosphorylase b kinase regulatory subunit beta (Drosophila melanogaster (Fruit fly)).